The chain runs to 64 residues: Large ribosomal subunit protein uL29 (64 aa).

Belongs to the universal ribosomal protein uL29 family.

The polypeptide is Large ribosomal subunit protein uL29 (Pseudomonas entomophila (strain L48)).